Here is a 304-residue protein sequence, read N- to C-terminus: Glutaminase (304 aa).

Substrate is bound by residues serine 63, asparagine 114, glutamate 158, asparagine 165, tyrosine 189, tyrosine 240, and valine 258.

Belongs to the glutaminase family. In terms of assembly, homotetramer.

The enzyme catalyses L-glutamine + H2O = L-glutamate + NH4(+). The chain is Glutaminase from Shewanella baltica (strain OS155 / ATCC BAA-1091).